The primary structure comprises 193 residues: dTTP/UTP pyrophosphatase (193 aa).

Asp70 acts as the Proton acceptor in catalysis.

The protein belongs to the Maf family. YhdE subfamily. A divalent metal cation is required as a cofactor.

The protein localises to the cytoplasm. The catalysed reaction is dTTP + H2O = dTMP + diphosphate + H(+). It carries out the reaction UTP + H2O = UMP + diphosphate + H(+). Its function is as follows. Nucleoside triphosphate pyrophosphatase that hydrolyzes dTTP and UTP. May have a dual role in cell division arrest and in preventing the incorporation of modified nucleotides into cellular nucleic acids. This is dTTP/UTP pyrophosphatase from Ruminiclostridium cellulolyticum (strain ATCC 35319 / DSM 5812 / JCM 6584 / H10) (Clostridium cellulolyticum).